Here is a 176-residue protein sequence, read N- to C-terminus: Cytochrome b (176 aa).

The next 3 helical transmembrane spans lie at 33–53, 77–98, and 113–133; these read FGSLLGVCLMMQILTGLFLAM, WLLRYLHANGASMFFICLYLHI, and WNVGIILLFAVMATAFMGYVL. Heme b-binding residues include His83 and His97.

It belongs to the cytochrome b family. The cytochrome bc1 complex contains 11 subunits: 3 respiratory subunits (MT-CYB, CYC1 and UQCRFS1), 2 core proteins (UQCRC1 and UQCRC2) and 6 low-molecular weight proteins (UQCRH/QCR6, UQCRB/QCR7, UQCRQ/QCR8, UQCR10/QCR9, UQCR11/QCR10 and a cleavage product of UQCRFS1). This cytochrome bc1 complex then forms a dimer. The cofactor is heme b.

Its subcellular location is the mitochondrion inner membrane. In terms of biological role, component of the ubiquinol-cytochrome c reductase complex (complex III or cytochrome b-c1 complex) that is part of the mitochondrial respiratory chain. The b-c1 complex mediates electron transfer from ubiquinol to cytochrome c. Contributes to the generation of a proton gradient across the mitochondrial membrane that is then used for ATP synthesis. The polypeptide is Cytochrome b (MT-CYB) (Promops centralis (Big crested mastiff bat)).